Reading from the N-terminus, the 656-residue chain is DNA ligase (656 aa).

NAD(+) contacts are provided by residues 32–36 (DAVYD) and 81–82 (SL). Lys112 acts as the N6-AMP-lysine intermediate in catalysis. NAD(+)-binding residues include Arg133, Glu167, and Lys306. Zn(2+)-binding residues include Cys400, Cys403, Cys416, and Cys421. A BRCT domain is found at 577–656 (KSSSVFNNKT…ELLKRLKELD (80 aa)).

It belongs to the NAD-dependent DNA ligase family. LigA subfamily. It depends on Mg(2+) as a cofactor. Requires Mn(2+) as cofactor.

It carries out the reaction NAD(+) + (deoxyribonucleotide)n-3'-hydroxyl + 5'-phospho-(deoxyribonucleotide)m = (deoxyribonucleotide)n+m + AMP + beta-nicotinamide D-nucleotide.. In terms of biological role, DNA ligase that catalyzes the formation of phosphodiester linkages between 5'-phosphoryl and 3'-hydroxyl groups in double-stranded DNA using NAD as a coenzyme and as the energy source for the reaction. It is essential for DNA replication and repair of damaged DNA. This Helicobacter pylori (strain HPAG1) protein is DNA ligase.